Here is a 188-residue protein sequence, read N- to C-terminus: Elongation factor P (188 aa).

N6-(3,6-diaminohexanoyl)-5-hydroxylysine is present on Lys34.

It belongs to the elongation factor P family. In terms of processing, may be beta-lysylated on the epsilon-amino group of Lys-34 by the combined action of EpmA and EpmB, and then hydroxylated on the C5 position of the same residue by EpmC (if this protein is present). Lysylation is critical for the stimulatory effect of EF-P on peptide-bond formation. The lysylation moiety may extend toward the peptidyltransferase center and stabilize the terminal 3-CCA end of the tRNA. Hydroxylation of the C5 position on Lys-34 may allow additional potential stabilizing hydrogen-bond interactions with the P-tRNA.

Its subcellular location is the cytoplasm. The protein operates within protein biosynthesis; polypeptide chain elongation. Its function is as follows. Involved in peptide bond synthesis. Alleviates ribosome stalling that occurs when 3 or more consecutive Pro residues or the sequence PPG is present in a protein, possibly by augmenting the peptidyl transferase activity of the ribosome. Modification of Lys-34 is required for alleviation. This chain is Elongation factor P, found in Aliivibrio fischeri (strain ATCC 700601 / ES114) (Vibrio fischeri).